We begin with the raw amino-acid sequence, 165 residues long: Protein SprT (165 aa).

A SprT-like domain is found at 22–163 (LAQANLKLDR…RCVHCGEPLV (142 aa)). His-78 provides a ligand contact to Zn(2+). Residue Glu-79 is part of the active site. A Zn(2+)-binding site is contributed by His-82.

The protein belongs to the SprT family. It depends on Zn(2+) as a cofactor.

The protein localises to the cytoplasm. This is Protein SprT from Salmonella paratyphi A (strain ATCC 9150 / SARB42).